A 351-amino-acid polypeptide reads, in one-letter code: Selenide, water dikinase (351 aa).

Cys20 is an active-site residue. Residues Lys23 and 51-53 (TKD) contribute to the ATP site. A Mg(2+)-binding site is contributed by Asp54. ATP-binding positions include Asp71, Asp94, and 142–144 (GHS). Asp94 serves as a coordination point for Mg(2+). Asp230 contacts Mg(2+).

This sequence belongs to the selenophosphate synthase 1 family. Class I subfamily. In terms of assembly, homodimer. It depends on Mg(2+) as a cofactor.

The enzyme catalyses hydrogenselenide + ATP + H2O = selenophosphate + AMP + phosphate + 2 H(+). Functionally, synthesizes selenophosphate from selenide and ATP. The polypeptide is Selenide, water dikinase (Pasteurella multocida (strain Pm70)).